Consider the following 188-residue polypeptide: Elongation factor P (188 aa).

An N6-(3,6-diaminohexanoyl)-5-hydroxylysine modification is found at K34.

Belongs to the elongation factor P family. May be beta-lysylated on the epsilon-amino group of Lys-34 by the combined action of EpmA and EpmB, and then hydroxylated on the C5 position of the same residue by EpmC (if this protein is present). Lysylation is critical for the stimulatory effect of EF-P on peptide-bond formation. The lysylation moiety may extend toward the peptidyltransferase center and stabilize the terminal 3-CCA end of the tRNA. Hydroxylation of the C5 position on Lys-34 may allow additional potential stabilizing hydrogen-bond interactions with the P-tRNA.

The protein resides in the cytoplasm. It participates in protein biosynthesis; polypeptide chain elongation. Functionally, involved in peptide bond synthesis. Alleviates ribosome stalling that occurs when 3 or more consecutive Pro residues or the sequence PPG is present in a protein, possibly by augmenting the peptidyl transferase activity of the ribosome. Modification of Lys-34 is required for alleviation. The chain is Elongation factor P from Actinobacillus succinogenes (strain ATCC 55618 / DSM 22257 / CCUG 43843 / 130Z).